An 89-amino-acid chain; its full sequence is Small ribosomal subunit protein uS15 (89 aa).

Belongs to the universal ribosomal protein uS15 family. Part of the 30S ribosomal subunit. Forms a bridge to the 50S subunit in the 70S ribosome, contacting the 23S rRNA.

In terms of biological role, one of the primary rRNA binding proteins, it binds directly to 16S rRNA where it helps nucleate assembly of the platform of the 30S subunit by binding and bridging several RNA helices of the 16S rRNA. Functionally, forms an intersubunit bridge (bridge B4) with the 23S rRNA of the 50S subunit in the ribosome. This Prochlorococcus marinus subsp. pastoris (strain CCMP1986 / NIES-2087 / MED4) protein is Small ribosomal subunit protein uS15.